The sequence spans 122 residues: Large ribosomal subunit protein uL14 (122 aa).

It belongs to the universal ribosomal protein uL14 family. In terms of assembly, part of the 50S ribosomal subunit. Forms a cluster with proteins L3 and L19. In the 70S ribosome, L14 and L19 interact and together make contacts with the 16S rRNA in bridges B5 and B8.

Functionally, binds to 23S rRNA. Forms part of two intersubunit bridges in the 70S ribosome. In Pelagibacter ubique (strain HTCC1062), this protein is Large ribosomal subunit protein uL14.